The chain runs to 398 residues: Glycerol-3-phosphate dehydrogenase [NAD(+)] 1 (398 aa).

NAD(+) contacts are provided by residues 50–55 (GSGNWG), Phe138, Lys161, and Ala194. Lys161 is a binding site for substrate. Lys253 acts as the Proton acceptor in catalysis. 2 residues coordinate NAD(+): Arg318 and Gln350. 318–319 (RN) lines the substrate pocket.

Belongs to the NAD-dependent glycerol-3-phosphate dehydrogenase family.

It is found in the cytoplasm. It catalyses the reaction sn-glycerol 3-phosphate + NAD(+) = dihydroxyacetone phosphate + NADH + H(+). This Yarrowia lipolytica (strain CLIB 122 / E 150) (Yeast) protein is Glycerol-3-phosphate dehydrogenase [NAD(+)] 1 (GPD1).